The following is a 366-amino-acid chain: Homoserine O-acetyltransferase (366 aa).

The 303-residue stretch at 47-349 (NAILICHALS…SGEGHDSFLL (303 aa)) folds into the AB hydrolase-1 domain. The active-site Nucleophile is S153. Residue R221 participates in substrate binding. Residues D311 and H344 contribute to the active site. Substrate is bound at residue D345.

It belongs to the AB hydrolase superfamily. MetX family. In terms of assembly, homodimer.

It is found in the cytoplasm. It catalyses the reaction L-homoserine + acetyl-CoA = O-acetyl-L-homoserine + CoA. It functions in the pathway amino-acid biosynthesis; L-methionine biosynthesis via de novo pathway; O-acetyl-L-homoserine from L-homoserine: step 1/1. In terms of biological role, transfers an acetyl group from acetyl-CoA to L-homoserine, forming acetyl-L-homoserine. This is Homoserine O-acetyltransferase from Leptospira interrogans serogroup Icterohaemorrhagiae serovar copenhageni (strain Fiocruz L1-130).